The primary structure comprises 214 residues: Endothelial cell-specific chemotaxis regulator (214 aa).

The N-terminal stretch at 1 to 18 (MRLGSAILGLLLLQGYSS) is a signal peptide. The Extracellular portion of the chain corresponds to 19 to 130 (QPTTTQTSQE…PTPTSESVLT (112 aa)). The interval 23-107 (TQTSQEILQK…DATPSPETTS (85 aa)) is disordered. Over residues 28–57 (EILQKSSQVSLVSNQPVTPRSSTMDKQSLS) the composition is skewed to polar residues. The span at 80–90 (RSSSSSSSSSS) shows a compositional bias: low complexity. A helical membrane pass occupies residues 131–151 (VAAFGVISFIVILVVVVIILV). Over 152-214 (SVVSLRFKCR…KGSMSAEKIL (63 aa)) the chain is Cytoplasmic. Residues 163-184 (NKESEDPQKPGSSGLSESCSTA) form a disordered region. Polar residues predominate over residues 172 to 184 (PGSSGLSESCSTA). Phosphoserine is present on residues Ser204 and Ser207.

This sequence belongs to the ECSCR family. As to quaternary structure, interacts with FLNA. Interacts with the 20S proteasome subunit PSMA7. In terms of processing, may be heavily O-glycosylated. Expressed in all tissues examined, highest expression was observed in lung and spleen endothelial cells.

It localises to the cell membrane. Its subcellular location is the cytoplasm. Functionally, regulates endothelial chemotaxis and tube formation. Has a role in angiogenesis and apoptosis via modulation of the actin cytoskeleton and facilitation of proteasomal degradation of the apoptosis inhibitors BIRC3/IAP1 and BIRC2/IAP2. The polypeptide is Endothelial cell-specific chemotaxis regulator (Ecscr) (Mus musculus (Mouse)).